The chain runs to 336 residues: UPF0324 membrane protein BT_1919 (336 aa).

The next 8 helical transmembrane spans lie at L2–G19, F23–S45, I85–L107, I117–L134, T147–Y169, A210–V232, W253–V275, and F310–T332.

It belongs to the UPF0324 family.

Its subcellular location is the cell membrane. This chain is UPF0324 membrane protein BT_1919, found in Bacteroides thetaiotaomicron (strain ATCC 29148 / DSM 2079 / JCM 5827 / CCUG 10774 / NCTC 10582 / VPI-5482 / E50).